A 352-amino-acid polypeptide reads, in one-letter code: DNA polymerase IV (352 aa).

The 182-residue stretch at 4–185 (IIHVDMDCFF…LPLSKIPGVG (182 aa)) folds into the UmuC domain. 2 residues coordinate Mg(2+): Asp-8 and Asp-103. The active site involves Glu-104.

It belongs to the DNA polymerase type-Y family. As to quaternary structure, monomer. Requires Mg(2+) as cofactor.

Its subcellular location is the cytoplasm. It catalyses the reaction DNA(n) + a 2'-deoxyribonucleoside 5'-triphosphate = DNA(n+1) + diphosphate. Its function is as follows. Poorly processive, error-prone DNA polymerase involved in untargeted mutagenesis. Copies undamaged DNA at stalled replication forks, which arise in vivo from mismatched or misaligned primer ends. These misaligned primers can be extended by PolIV. Exhibits no 3'-5' exonuclease (proofreading) activity. May be involved in translesional synthesis, in conjunction with the beta clamp from PolIII. The chain is DNA polymerase IV from Yersinia enterocolitica serotype O:8 / biotype 1B (strain NCTC 13174 / 8081).